Here is a 505-residue protein sequence, read N- to C-terminus: Glutamate--tRNA ligase (505 aa).

Positions 11–21 (PSPTGPLHIGG) match the 'HIGH' region motif. The short motif at 260 to 264 (KLSKR) is the 'KMSKS' region element. An ATP-binding site is contributed by Lys-263.

This sequence belongs to the class-I aminoacyl-tRNA synthetase family. Glutamate--tRNA ligase type 1 subfamily. As to quaternary structure, monomer.

It localises to the cytoplasm. It carries out the reaction tRNA(Glu) + L-glutamate + ATP = L-glutamyl-tRNA(Glu) + AMP + diphosphate. Catalyzes the attachment of glutamate to tRNA(Glu) in a two-step reaction: glutamate is first activated by ATP to form Glu-AMP and then transferred to the acceptor end of tRNA(Glu). This is Glutamate--tRNA ligase from Christiangramia forsetii (strain DSM 17595 / CGMCC 1.15422 / KT0803) (Gramella forsetii).